Reading from the N-terminus, the 231-residue chain is NADH-ubiquinone oxidoreductase chain 4 (231 aa).

Transmembrane regions (helical) follow at residues 1-21 (PIAGSMVLAAVLLKLGGYGII), 34-54 (MFLPFIVLALWGAILANLTCL), 63-85 (IAYSSISHMGLVVAAIIIQTPWG), 89-111 (AMALMIAHGFTSSALFCLANTTY), 128-148 (ILPMTTTWWLLANLMNIATPP), 169-189 (TIILLGLSMLITASYSLHMFL), and 211-231 (LLMALHLVPLMMISMKPELII).

It belongs to the complex I subunit 4 family.

It localises to the mitochondrion membrane. The catalysed reaction is a ubiquinone + NADH + 5 H(+)(in) = a ubiquinol + NAD(+) + 4 H(+)(out). Its function is as follows. Core subunit of the mitochondrial membrane respiratory chain NADH dehydrogenase (Complex I) that is believed to belong to the minimal assembly required for catalysis. Complex I functions in the transfer of electrons from NADH to the respiratory chain. The immediate electron acceptor for the enzyme is believed to be ubiquinone. This is NADH-ubiquinone oxidoreductase chain 4 (MT-ND4) from Cerrophidion godmani (Porthidium godmani).